A 413-amino-acid chain; its full sequence is Inactive squalene synthase 2 (413 aa).

G2 is modified (N-acetylglycine). 2 helical membrane passes run 283–303 and 390–410; these read AIFQ…ALCY and AIFV…LKAN.

Belongs to the phytoene/squalene synthase family. It depends on Mg(2+) as a cofactor. The cofactor is Mn(2+). As to expression, mostly expressed in hypocotyls, leaves and cotyledons, and, to a lower extent, in stems.

It localises to the endoplasmic reticulum membrane. The chain is Inactive squalene synthase 2 from Arabidopsis thaliana (Mouse-ear cress).